The sequence spans 331 residues: F-box protein At2g26160 (331 aa).

The F-box domain maps to 4–52 (PEWSELPGDLINLTANRFSSISDVLRVRSICKPWRSAAATPKSFQCNLP).

This Arabidopsis thaliana (Mouse-ear cress) protein is F-box protein At2g26160.